The following is a 381-amino-acid chain: Homoserine O-succinyltransferase (381 aa).

The region spanning 53–361 is the AB hydrolase-1 domain; sequence ILICHALSGS…DSVHGHDAFL (309 aa). Catalysis depends on Ser157, which acts as the Nucleophile. Arg227 serves as a coordination point for substrate. Catalysis depends on residues Asp324 and His357. Asp358 provides a ligand contact to substrate.

It belongs to the AB hydrolase superfamily. MetX family. In terms of assembly, homodimer.

The protein resides in the cytoplasm. The catalysed reaction is L-homoserine + succinyl-CoA = O-succinyl-L-homoserine + CoA. The protein operates within amino-acid biosynthesis; L-methionine biosynthesis via de novo pathway; O-succinyl-L-homoserine from L-homoserine: step 1/1. Transfers a succinyl group from succinyl-CoA to L-homoserine, forming succinyl-L-homoserine. This chain is Homoserine O-succinyltransferase, found in Saccharophagus degradans (strain 2-40 / ATCC 43961 / DSM 17024).